We begin with the raw amino-acid sequence, 172 residues long: Ribosome maturation factor RimM (172 aa).

One can recognise a PRC barrel domain in the interval 95–168; the sequence is DDGEFYYHEI…RVDVEILEGL (74 aa).

Belongs to the RimM family. As to quaternary structure, binds ribosomal protein uS19.

It localises to the cytoplasm. An accessory protein needed during the final step in the assembly of 30S ribosomal subunit, possibly for assembly of the head region. Essential for efficient processing of 16S rRNA. May be needed both before and after RbfA during the maturation of 16S rRNA. It has affinity for free ribosomal 30S subunits but not for 70S ribosomes. This chain is Ribosome maturation factor RimM, found in Streptococcus pneumoniae (strain P1031).